We begin with the raw amino-acid sequence, 2058 residues long: Protein Daple (2058 aa).

The Calponin-homology (CH) domain occupies 11-131 (HFLESPLVTW…KILLLMLGCA (121 aa)). 5 coiled-coil regions span residues 195–221 (HLKRLIDERDECKEVIVDLTQERDYLQ), 247–428 (EDKK…SMNE), 455–1016 (ELNE…LRGA), 1043–1082 (ELLKFKDRTIELERNNAALQAEKKLFREQLQHLESHNLNL), and 1108–1388 (ANLQ…KFYD). 7 disordered regions span residues 1406-1444 (LIKPKKEPSRESVKSPTDVQSKTMDNAEMAASPSSMRPL), 1480-1592 (HRMS…EDMI), 1617-1655 (TKNRESPVNRNSLHLYDYPEKKNSSRTPTRPRPGSPGSE), 1696-1724 (LHPSSQSPSPTLHLKDPSQTAVPKSLPSA), 1831-1857 (YSATSSSQSPEPQALSPHGAMGSRGNS), 1940-1959 (LALPKEETTPPQPAPSASSL), and 1988-2051 (PVRP…PQTV). Positions 1409-1418 (PKKEPSRESV) are enriched in basic and acidic residues. The segment covering 1419–1429 (KSPTDVQSKTM) has biased composition (polar residues). The span at 1494–1506 (GPEHLSRSRRMES) shows a compositional bias: basic and acidic residues. The span at 1552 to 1577 (NAGSSRVPWTSSLEVSRSASNSSSPL) shows a compositional bias: polar residues. Short sequence motifs (GBA) lie at residues 1653 to 1675 (GSEMVTLEEFLQESSRQSPPSRR) and 1676 to 1697 (HSLNDSELITLHQFLFEAETLH). Over residues 1831 to 1841 (YSATSSSQSPE) the composition is skewed to polar residues. The segment covering 2039-2048 (PASPDPSADP) has biased composition (low complexity). A PDZ-binding motif is present at residues 2055-2058 (YGCV).

The protein belongs to the CCDC88 family. In terms of assembly, interacts with dvl2/dsh via the PDZ-binding motif. As to expression, expressed weakly in gastrulae, with slightly stronger expression in the dorsal region. In neurulae, expressed in the neural plate with strong expression in the presumptive mesencephalic region. At the tailbud stage, expressed in somatic cells and in part of the tail. Also strongly expressed in regions of the head including eye vesicles, otic vesicles, olfactory placode and the pharyngeal cavity.

The protein resides in the cytoplasm. Its subcellular location is the cell junction. Functionally, positive regulator of Wnt signaling, acting synergistically with dvl2/dsh. Functions upstream of ctnnb1/beta-catenin in the canonical Wnt pathway, and also activates jnk in the Wnt/planar cell polarity (PCP) pathway. Acts as a non-receptor guanine nucleotide exchange factor which binds to and activates guanine nucleotide-binding protein G(i) alpha subunits. This promotes apical cell constriction and subsequent bending of the neural plate during neurulation via arhgef18. The chain is Protein Daple (ccdc88c) from Xenopus laevis (African clawed frog).